The chain runs to 653 residues: Exocyst complex component EXO70C1 (653 aa).

Composition is skewed to basic and acidic residues over residues 1-34 (MEKS…DELH), 159-177 (SREE…DGSN), and 438-451 (NKPE…QQQR). 3 disordered regions span residues 1–50 (MEKS…HSLV), 159–190 (SREE…DSDR), and 432–456 (EANQ…DDEE).

This sequence belongs to the EXO70 family. As to quaternary structure, interacts with ROH1A. Binds directly to B1L. In terms of processing, phosphorylated. Expressed in anthers, pollen and root trichoblast cells.

The protein localises to the cytoplasm. Its function is as follows. Required for global plant growth and for male transmission. Involved in the regulation of tip growth of pollen tube. This is Exocyst complex component EXO70C1 from Arabidopsis thaliana (Mouse-ear cress).